The sequence spans 198 residues: Na(+)-translocating NADH-quinone reductase subunit E (198 aa).

The next 6 membrane-spanning stretches (helical) occupy residues 11–31 (SIFI…FLAV), 39–59 (FGLG…NNLV), 77–97 (FLNF…LEMI), 110–130 (GIFL…SFMV), 140–160 (VVYG…LAGI), and 176–196 (LGIT…FSGV).

It belongs to the NqrDE/RnfAE family. As to quaternary structure, composed of six subunits; NqrA, NqrB, NqrC, NqrD, NqrE and NqrF.

Its subcellular location is the cell inner membrane. It catalyses the reaction a ubiquinone + n Na(+)(in) + NADH + H(+) = a ubiquinol + n Na(+)(out) + NAD(+). In terms of biological role, NQR complex catalyzes the reduction of ubiquinone-1 to ubiquinol by two successive reactions, coupled with the transport of Na(+) ions from the cytoplasm to the periplasm. NqrA to NqrE are probably involved in the second step, the conversion of ubisemiquinone to ubiquinol. This is Na(+)-translocating NADH-quinone reductase subunit E from Vibrio vulnificus (strain CMCP6).